The chain runs to 508 residues: Lysine--tRNA ligase (508 aa).

Mg(2+)-binding residues include Glu418 and Glu425.

Belongs to the class-II aminoacyl-tRNA synthetase family. In terms of assembly, homodimer. It depends on Mg(2+) as a cofactor.

The protein localises to the cytoplasm. The catalysed reaction is tRNA(Lys) + L-lysine + ATP = L-lysyl-tRNA(Lys) + AMP + diphosphate. The sequence is that of Lysine--tRNA ligase from Burkholderia pseudomallei (strain 1710b).